The primary structure comprises 379 residues: Putative cyclic ADP-D-ribose synthase TIR2 (379 aa).

Residues 254–379 (KVYDVFISHS…TISWTTGLVK (126 aa)) form the TIR domain. The active site involves Glu-335.

Homodimer.

It localises to the cytoplasm. With respect to regulation, activated upon phage infection. In terms of biological role, one of 2 TIR-like protein components of the Thoeris antiviral defense system, composed of ThsA, TIR1 (thsB1) and TIR2 (thsB2). Phage infection activates this protein; by 70 minutes post-infection with phage SPO1, TIR2 generates a signal molecule that in turn activates the NAD(+) hydrolase activity of ThsA (tested with B.cereus). The signal is similar to cyclic ADP-D-ribose, but how it differs is unknown. Expression of Thoeris in B.subtilis (strain BEST7003) confers resistance to phages phi29, phi3T, SPBeta, SBSphi11, SBSphi13, SBSphiJ, SPO1 and SPR but not SBSphiC. The TIR paralogs confer resistance to different phages; this subunit confers resistance to phi3T, SPBeta, SBSphi13, SBSphiJ, SPO1 and SPR but not phi29, SBSphi11 or SBSphiC. There is overlap in the phage range for this system, both TIR1 and TIR2 are activated by SBSphi13, SBSphiJ, SPO1 and SPR. Probably hydrolyzes NAD(+) to make a cyclic ADP-D-ribose (cADPR) signaling molecule; might make 3'cADPR. This Cytobacillus dafuensis (Bacillus dafuensis) protein is Putative cyclic ADP-D-ribose synthase TIR2.